A 322-amino-acid polypeptide reads, in one-letter code: Glycerol-3-phosphate dehydrogenase [NAD(P)+] (322 aa).

NADPH is bound by residues W13, H33, and K99. Sn-glycerol 3-phosphate-binding residues include K99, G127, and S129. Position 131 (A131) interacts with NADPH. Sn-glycerol 3-phosphate-binding residues include K182, D235, S245, R246, and N247. K182 (proton acceptor) is an active-site residue. R246 lines the NADPH pocket. E272 contributes to the NADPH binding site.

This sequence belongs to the NAD-dependent glycerol-3-phosphate dehydrogenase family.

The protein resides in the cytoplasm. The enzyme catalyses sn-glycerol 3-phosphate + NAD(+) = dihydroxyacetone phosphate + NADH + H(+). It carries out the reaction sn-glycerol 3-phosphate + NADP(+) = dihydroxyacetone phosphate + NADPH + H(+). The protein operates within membrane lipid metabolism; glycerophospholipid metabolism. Functionally, catalyzes the reduction of the glycolytic intermediate dihydroxyacetone phosphate (DHAP) to sn-glycerol 3-phosphate (G3P), the key precursor for phospholipid synthesis. The protein is Glycerol-3-phosphate dehydrogenase [NAD(P)+] of Ruthia magnifica subsp. Calyptogena magnifica.